A 426-amino-acid polypeptide reads, in one-letter code: Coiled-coil domain-containing protein 86 (426 aa).

The interval 1–426 is disordered; sequence MDTPLRRSRR…QPPQRPVAKV (426 aa). Position 18 is a phosphoserine (Ser-18). The segment covering 33–49 has biased composition (basic and acidic residues); that stretch reads ALVDFKSNSEETGELKS. The span at 55 to 145 shows a compositional bias: pro residues; it reads LSLPSPGPQP…SLPSPGPQPE (91 aa). Ser-59 is modified (phosphoserine). Thr-66 carries the phosphothreonine modification. A phosphoserine mark is found at Ser-67, Ser-70, Ser-161, Ser-172, Ser-183, Ser-191, Ser-194, Ser-225, Ser-252, Ser-253, and Ser-283. Positions 241–255 are enriched in polar residues; sequence QPAQELTVQAPSSPE. Over residues 304 to 320 the composition is skewed to basic residues; that stretch reads GKPKSGRVWKDRSKKRF. A compositionally biased stretch (basic and acidic residues) spans 339 to 383; that stretch reads ERQERKLAKDFARHLEEEKQRRRQEKKERRAENLRRRLENERKAE. A coiled-coil region spans residues 346-389; sequence AKDFARHLEEEKQRRRQEKKERRAENLRRRLENERKAEIVQVIR. Basic residues predominate over residues 392–402; the sequence is AKLKKAKKKQL. At Arg-408 the chain carries Citrulline.

In terms of processing, citrullinated by PADI4. In terms of tissue distribution, highly expressed in testis. Also expressed in heart, liver, kidney.

Its subcellular location is the nucleus. It is found in the chromosome. It localises to the nucleolus. Its function is as follows. Required for proper chromosome segregation during mitosis and error-free mitotic progression. This Mus musculus (Mouse) protein is Coiled-coil domain-containing protein 86.